A 59-amino-acid chain; its full sequence is UPF0391 membrane protein lpg2521 (59 aa).

Helical transmembrane passes span Ala-5 to Val-25 and Ile-30 to Leu-50.

The protein belongs to the UPF0391 family.

Its subcellular location is the cell membrane. The sequence is that of UPF0391 membrane protein lpg2521 from Legionella pneumophila subsp. pneumophila (strain Philadelphia 1 / ATCC 33152 / DSM 7513).